We begin with the raw amino-acid sequence, 839 residues long: Septin-interacting protein 1 (839 aa).

The tract at residues 22–164 is disordered; it reads INRPRGRQSR…ASERNVGAWE (143 aa). Phosphoserine is present on residues Ser-43 and Ser-47. Thr-53 is modified (phosphothreonine). The segment covering 88–101 has biased composition (basic and acidic residues); sequence LQADDEKGSQKEGA. Positions 102–111 are enriched in acidic residues; that stretch reads EADQGEESDD. Residues 140–149 show a composition bias toward polar residues; that stretch reads SRKQPSTTFQ. The region spanning 167–213 is the G-patch domain; sequence TRGIGAKLLLQMGYEPGKGLGKDLQGISHPVQAHVRKGRGAIGAYGP. The stretch at 363 to 411 forms a coiled coil; that stretch reads IDNQERECSSQQAALESEHRKLEEIVQLERNHIRTLEESLERVERLIDN.

This sequence belongs to the TFP11/STIP family. As to quaternary structure, identified in the spliceosome C complex. Interacts with pnut.

The protein localises to the nucleus. May be involved in pre-mRNA splicing. This chain is Septin-interacting protein 1 (sip1), found in Drosophila melanogaster (Fruit fly).